We begin with the raw amino-acid sequence, 401 residues long: Imidazolonepropionase (401 aa).

Residues histidine 66 and histidine 68 each contribute to the Fe(3+) site. Positions 66 and 68 each coordinate Zn(2+). 3 residues coordinate 4-imidazolone-5-propanoate: arginine 75, tyrosine 138, and histidine 171. Tyrosine 138 is a binding site for N-formimidoyl-L-glutamate. Fe(3+) is bound at residue histidine 236. Histidine 236 serves as a coordination point for Zn(2+). Glutamine 239 provides a ligand contact to 4-imidazolone-5-propanoate. Position 311 (aspartate 311) interacts with Fe(3+). Residue aspartate 311 participates in Zn(2+) binding. Asparagine 313 and glycine 315 together coordinate N-formimidoyl-L-glutamate. Position 316 (threonine 316) interacts with 4-imidazolone-5-propanoate.

It belongs to the metallo-dependent hydrolases superfamily. HutI family. Zn(2+) is required as a cofactor. Fe(3+) serves as cofactor.

The protein localises to the cytoplasm. The enzyme catalyses 4-imidazolone-5-propanoate + H2O = N-formimidoyl-L-glutamate. It functions in the pathway amino-acid degradation; L-histidine degradation into L-glutamate; N-formimidoyl-L-glutamate from L-histidine: step 3/3. Its function is as follows. Catalyzes the hydrolytic cleavage of the carbon-nitrogen bond in imidazolone-5-propanoate to yield N-formimidoyl-L-glutamate. It is the third step in the universal histidine degradation pathway. The polypeptide is Imidazolonepropionase (Pseudomonas savastanoi pv. phaseolicola (strain 1448A / Race 6) (Pseudomonas syringae pv. phaseolicola (strain 1448A / Race 6))).